The chain runs to 175 residues: uncharacterized protein (175 aa).

2 disordered regions span residues 1–32 (MSHKDFNGLQAPQLLSSSSPVAKKQSSHKLRH) and 156–175 (KQKQAKRAANTRQRTYKYRQ). The span at 14–24 (LLSSSSPVAKK) shows a compositional bias: low complexity.

This is an uncharacterized protein from Mycoplasma pneumoniae (strain ATCC 29342 / M129 / Subtype 1) (Mycoplasmoides pneumoniae).